Consider the following 273-residue polypeptide: Outer surface protein A (273 aa).

Residues 1 to 16 (MKKYLLGIGLILALIA) form the signal peptide. Residue Cys-17 is the site of N-palmitoyl cysteine attachment. Cys-17 carries the S-diacylglycerol cysteine lipid modification.

Belongs to the OspA lipoprotein family.

Its subcellular location is the cell outer membrane. The protein localises to the cell surface. In terms of biological role, induces host (human and mouse) cytokine release by monocyte cell lines via TLR2 and CD14; nonlipidated protein does not stimulate host cells. The polypeptide is Outer surface protein A (Borreliella burgdorferi (strain ATCC 35210 / DSM 4680 / CIP 102532 / B31) (Borrelia burgdorferi)).